A 1293-amino-acid chain; its full sequence is Phosphoribosylformylglycinamidine synthase (1293 aa).

ATP contacts are provided by residues 308–319 and A675; that span reads GAATGAGGEIRD. The Mg(2+) site is built by D676, E715, N719, and D883. S885 contacts ATP. In terms of domain architecture, Glutamine amidotransferase type-1 spans 1040–1293; the sequence is MAILREQGVN…MFRNARKFIG (254 aa). Catalysis depends on C1133, which acts as the Nucleophile. Active-site residues include H1258 and E1260.

This sequence in the N-terminal section; belongs to the FGAMS family. In terms of assembly, monomer.

The protein localises to the cytoplasm. It carries out the reaction N(2)-formyl-N(1)-(5-phospho-beta-D-ribosyl)glycinamide + L-glutamine + ATP + H2O = 2-formamido-N(1)-(5-O-phospho-beta-D-ribosyl)acetamidine + L-glutamate + ADP + phosphate + H(+). It participates in purine metabolism; IMP biosynthesis via de novo pathway; 5-amino-1-(5-phospho-D-ribosyl)imidazole from N(2)-formyl-N(1)-(5-phospho-D-ribosyl)glycinamide: step 1/2. In terms of biological role, phosphoribosylformylglycinamidine synthase involved in the purines biosynthetic pathway. Catalyzes the ATP-dependent conversion of formylglycinamide ribonucleotide (FGAR) and glutamine to yield formylglycinamidine ribonucleotide (FGAM) and glutamate. The chain is Phosphoribosylformylglycinamidine synthase from Methylobacillus flagellatus (strain ATCC 51484 / DSM 6875 / VKM B-1610 / KT).